Here is a 390-residue protein sequence, read N- to C-terminus: Protein NDRG4-A (390 aa).

Residues 356-390 (LTSASSVDGSRPRPCTQSESSDGIGQINHTMEVSC) form a disordered region. Polar residues predominate over residues 370–390 (CTQSESSDGIGQINHTMEVSC).

Belongs to the NDRG family.

It is found in the cytoplasm. The protein resides in the cytosol. Contributes to the maintenance of intracerebral BDNF levels within the normal range. May enhance growth factor-induced ERK1 and ERK2 phosphorylation. May attenuate growth factor-promoted ELK1 phosphorylation in a microtubule-dependent manner. In Xenopus laevis (African clawed frog), this protein is Protein NDRG4-A (ndrg4-a).